The chain runs to 298 residues: ATP phosphoribosyltransferase (298 aa).

This sequence belongs to the ATP phosphoribosyltransferase family. Long subfamily. It depends on Mg(2+) as a cofactor.

The protein localises to the cytoplasm. The enzyme catalyses 1-(5-phospho-beta-D-ribosyl)-ATP + diphosphate = 5-phospho-alpha-D-ribose 1-diphosphate + ATP. It participates in amino-acid biosynthesis; L-histidine biosynthesis; L-histidine from 5-phospho-alpha-D-ribose 1-diphosphate: step 1/9. Feedback inhibited by histidine. In terms of biological role, catalyzes the condensation of ATP and 5-phosphoribose 1-diphosphate to form N'-(5'-phosphoribosyl)-ATP (PR-ATP). Has a crucial role in the pathway because the rate of histidine biosynthesis seems to be controlled primarily by regulation of HisG enzymatic activity. The polypeptide is ATP phosphoribosyltransferase (hisG) (Photobacterium profundum (strain SS9)).